A 91-amino-acid polypeptide reads, in one-letter code: DNA-binding protein HU (91 aa).

Belongs to the bacterial histone-like protein family. As to quaternary structure, homodimer.

Its function is as follows. Histone-like DNA-binding protein which is capable of wrapping DNA to stabilize it, and thus to prevent its denaturation under extreme environmental conditions. This is DNA-binding protein HU (hup) from Streptococcus thermophilus.